Consider the following 560-residue polypeptide: Leucine-rich repeat and IQ domain-containing protein 4 (560 aa).

Residues 1–20 form a disordered region; the sequence is MSKDIKSVEHSPKIHQRNDP. LRR repeat units lie at residues 23–47, 48–70, 72–95, 97–116, 117–140, 141–164, 166–187, 188–210, 212–233, 234–256, 258–281, 283–301, 302–325, 326–348, 350–371, 374–397, 398–422, 424–443, 444–466, and 468–489; these read VNDRTFFIDASNQSLTAIPLEIFTF, TELEEVHLENNQIEEIPQEIQRL, NIRVLYLDKNNLRSLCPALGLLSS, ESLDLSYNPIFSSSLVVVSF, LHALRELRLYQTDLKEIPVVIFKN, LHHLELLGLTGNHLKCLPKEIVNQ, KLREIYLKRNQFEVFPQELCVL, YTLEIIDLDENKIGAIPEEIGHL, GLQKFYMASNNLPVLPASLCQC, SQLSVLDLSHNLLHSIPKSFAEL, KMTEIGLSGNRLEKVPRLICRWTS, HLLYLGNTGLHRLRGSFRC, LVNLRFLDLSQNHLHHCPLQICAL, KNLEVLGLDDNKIGQLPSELGSL, KLKILGLTGNEFLSFPEEVLSL, LEKLYIGQDQGFKLTYVPEHIRKL, QSLKELYIENNHLEYLPVSLGSMPN, EVLDCRHNLLKQLPDAICQA, QALKELRLEDNLLTHLPENLDSL, and NLKVLTLMDNPMEEPPKEVCAE. The region spanning 504–533 is the IQ domain; sequence RNIMATKIQAWWRGTMVQRGFGKFGELLKP. Residues 529 to 560 are disordered; that stretch reads ELLKPQKKGKTSPKDKKGKKDVKGKPGKGKKK. Residues 533–560 are compositionally biased toward basic residues; sequence PQKKGKTSPKDKKGKKDVKGKPGKGKKK.

In Homo sapiens (Human), this protein is Leucine-rich repeat and IQ domain-containing protein 4 (LRRIQ4).